Reading from the N-terminus, the 265-residue chain is Short-chain dehydrogenase/reductase fsr5 (265 aa).

The first 32 residues, 1–32 (MASLGKYVSKLAGSRVLVIGGSSGIGFGVAEA), serve as a signal peptide directing secretion. NADP(+) is bound by residues Ser22, Ser23, Ile25, Ser45, and Lys50. N-linked (GlcNAc...) asparagine glycosylation is present at Asn62. NADP(+)-binding residues include Asn88, Arg130, and Thr204. N-linked (GlcNAc...) asparagine glycosylation is found at Asn218 and Asn250.

This sequence belongs to the short-chain dehydrogenases/reductases (SDR) family.

Functionally, short-chain dehydrogenase/reductase; part of the gene cluster that mediates the biosynthesis of fusarubins, highly pigmented naphthoquinones responsible for the coloration of the fruiting bodies. The non-reducing polyketide synthase FSR1 is responsible for the condensation of seven acetyl-CoA units to yield a haptaketide. After rings A and B are formed by aldol-type cyclization, the PKS-derived product is released as 6-O-demethylfusarubinaldehyde. Then, two hydroxyl groups at C-5 and C-10 are incorporated by FSR3, and simultaneously hydroxyl groups at C-6 and C-8 are methylated by FSR2. The aldehyde is, on the one hand, reduced by FSR3 to 8-O-methylfusarubin alcohol, which equilibrates mainly with 8-O-methylfusarubin and only small amounts of 8-O-methylnectriafurone. On the other hand, the aldehyde can be oxidized to form 8-O-methylfusarubinic acid, a reaction driven by FSR3 equilibrating with 8-O-methylfusarubinlactone, finally resulting in 8-O-methylanhydrofusarubinlactol after a further reduction step and loss of water. 8-O-Methylfusarubinic acid can also undergo decarboxylation, resulting in 8-O-methyl-13-hydroxynorjavanicin after another hydroxylation step at C-13. Both steps are most likely also accomplished by FSR3. No enzymatic function has been determined so far for either FSR4 and FSR5. Their deletion does not alter the product spectrum, but the possibility that they catalyze specific enzymatic steps during perithecium development cannot be ruled out. FSR4 might possess a regulatory function in the biosynthesis of fusarubins. In Gibberella fujikuroi (strain CBS 195.34 / IMI 58289 / NRRL A-6831) (Bakanae and foot rot disease fungus), this protein is Short-chain dehydrogenase/reductase fsr5.